A 241-amino-acid chain; its full sequence is DnaA regulatory inactivator Hda (241 aa).

Belongs to the DnaA family. HdA subfamily. The active form seems to be an ADP-bound monomer. Forms the RIDA complex (regulatory inactivation of DnaA) of ATP-DnaA, ADP-Hda and the DNA-loaded beta sliding clamp (dnaN).

Mediates the interaction of DNA replication initiator protein DnaA with DNA polymerase subunit beta sliding clamp (dnaN). Stimulates hydrolysis of ATP-DnaA to ADP-DnaA, rendering DnaA inactive for reinitiation, a process called regulatory inhibition of DnaA or RIDA. The polypeptide is DnaA regulatory inactivator Hda (Salmonella agona (strain SL483)).